The following is a 1042-amino-acid chain: MPMWAGGVGSPRRGMAPASTDDLFARKLRQPARPPLTPHTFEPRPVRGPLLRSGSDAGEARPPTPASPRARAHSHEEASRPAATSTRLFTDPLALLGLPAEEPEPAFPPVLEPRWFAHYDVQSLLFDWAPRSQGMGSHSEASSGTLASAEDQAASSDLLHGAPGFVCELGGEGELGLGGPASPPVPPALPNAAVSILEEPQNRTSAYSLEHADLGAGYYRKYFYGKEHQNFFGMDESLGPVAVSLRREEKEGSGGGTLHSYRVIVRTTQLRTLRGTISEDALPPGPPRGLSPRKLLEHVAPQLSPSCLRLGSASPKVPRTLLTLDEQVLSFQRKVGILYCRAGQGSEEEMYNNQEAGPAFMQFLTLLGDVVRLKGFESYRAQLDTKTDSTGTHSLYTTYQDHEIMFHVSTMLPYTPNNQQQLLRKRHIGNDIVTIVFQEPGSKPFCPTTIRSHFQHVFLVVRAHTPCTPHTTYRVAVSRTQDTPAFGPALPAGGGPFAANADFRAFLLAKALNGEQAAGHARQFHAMATRTRQQYLQDLATNEVTTTSLDSASRFGLPSLGGRRRAAPRGPGAELQAAGSLVWGVRAAPGARVAAGAQASGPEGIEVPCLLGISAEALVLVAPRDGRVVFNCACRDVLAWTFSEQQLDLYHGRGEAITLRFDGSPGQAVGEVVARLQLVSRGCETRELALPRDGQGRLGFEVDAEGFVTHVERFTFAETAGLRPGARLLRVCGQTLPSLRPEAAAQLLRSAPKVCVTVLPPDESGRPRRSFSELYTLSLQEPSRRGAPDPVQDEVQGVTLLPTTKQLLHLCLQDGGSPPGPGDLAEERTEFLHSQNSLSPRSSLSDEAPVLPNTTPDLLLATTAKPSVPSADSETPLTQDRPGSPSGSEDKGNPAPELRASFLPRTLSLRNSISRIMSEAGSGTLEDEWQAISEIASTCNTILESLSREGQPIPESGDPKGTPKSDAEPEPGNLSEKVSHLESMLRKLQEDLQKEKADRAALEEEVRSLRHNNRRLQAESESAATRLLLASKQLGSPTADLA.

Disordered stretches follow at residues 1 to 87 (MPMW…TSTR) and 132 to 153 (SQGM…EDQA). Threonine 64 carries the phosphothreonine modification. Serine 67 is subject to Phosphoserine. The span at 134–146 (GMGSHSEASSGTL) shows a compositional bias: polar residues. Phosphoserine is present on residues serine 182, serine 304, and serine 314. The Rap-GAP domain occupies 321–539 (LLTLDEQVLS…RTRQQYLQDL (219 aa)). Residues 687-763 (ELALPRDGQG…VCVTVLPPDE (77 aa)) form the PDZ domain. A phosphoserine mark is found at serine 817, serine 839, and serine 912. The tract at residues 830-903 (EFLHSQNSLS…PAPELRASFL (74 aa)) is disordered. The segment covering 832–845 (LHSQNSLSPRSSLS) has biased composition (low complexity). The tract at residues 946 to 980 (LSREGQPIPESGDPKGTPKSDAEPEPGNLSEKVSH) is disordered. The span at 957–967 (GDPKGTPKSDA) shows a compositional bias: basic and acidic residues. Residues 972–1034 (GNLSEKVSHL…TRLLLASKQL (63 aa)) are a coiled coil.

Interacts with RRP1B; the interaction leads to inhibition of SIPA1 GTPase activity. As to expression, expressed in fetal as well as in adult tissues. Expressed abundantly in the lymphoid tissues such as thymus, spleen and peripheral blood lymphocytes and also shows a significant expression in the spinal cord.

It localises to the nucleus. The protein localises to the cytoplasm. It is found in the perinuclear region. The protein resides in the endomembrane system. Its function is as follows. GTPase activator for the nuclear Ras-related regulatory proteins Rap1 and Rap2 in vitro, converting them to the putatively inactive GDP-bound state. Affects cell cycle progression. This is Signal-induced proliferation-associated protein 1 (SIPA1) from Homo sapiens (Human).